A 292-amino-acid polypeptide reads, in one-letter code: MKNYSQYHQDIMNQKLENIRNNIQCSFEFFPPKNSFLEENLWSTVNRLSLLKPKFFSVTYGANTGEREKTYDTVQKIYKKTGIITAAHLTCIDSTPHKLKEIAYNYWNSGIKSIVALRGDTLEKDYRHTMYAVDLVLLLKKIADFDISVAAYPELHPESKNVKSDILNLKKKVDAGASRAITQFFFNIESYLRFRDNCIKNKINIDIIPGILPVCNFQKLKRFSSMTNVKIPKWMLDMFNGLDDDIFTQKIIGSSIAIDMVKKLSCEGVKNFHFYTLNQSDITYSICHILGL.

Glutamate 28 functions as the Proton donor/acceptor in the catalytic mechanism. An NADH-binding site is contributed by threonine 59. FAD contacts are provided by tyrosine 60, alanine 62, histidine 88, arginine 118, glycine 119, aspartate 120, alanine 132, tyrosine 152, histidine 156, aspartate 165, asparagine 168, lysine 171, and lysine 172. Aspartate 120 provides a ligand contact to (6S)-5-methyl-5,6,7,8-tetrahydrofolate. Glutamine 183 serves as a coordination point for NADH. Glutamine 183 contacts (6S)-5-methyl-5,6,7,8-tetrahydrofolate.

This sequence belongs to the methylenetetrahydrofolate reductase family. It depends on FAD as a cofactor.

It carries out the reaction (6S)-5-methyl-5,6,7,8-tetrahydrofolate + NAD(+) = (6R)-5,10-methylene-5,6,7,8-tetrahydrofolate + NADH + H(+). It participates in one-carbon metabolism; tetrahydrofolate interconversion. It functions in the pathway amino-acid biosynthesis; L-methionine biosynthesis via de novo pathway. In terms of biological role, catalyzes the NADH-dependent reduction of 5,10-methylenetetrahydrofolate to 5-methyltetrahydrofolate. Is required to provide the methyl group necessary for methionine synthetase to convert homocysteine to methionine; the methyl group is given by 5-methyltetrahydrofolate. In Buchnera aphidicola subsp. Acyrthosiphon pisum (strain APS) (Acyrthosiphon pisum symbiotic bacterium), this protein is 5,10-methylenetetrahydrofolate reductase (metF).